Here is a 31-residue protein sequence, read N- to C-terminus: Large ribosomal subunit protein bL21 (31 aa).

The protein belongs to the bacterial ribosomal protein bL21 family. In terms of assembly, part of the 50S ribosomal subunit. Contacts protein L20.

Functionally, this protein binds to 23S rRNA in the presence of protein L20. In Streptococcus thermophilus, this protein is Large ribosomal subunit protein bL21 (rplU).